The following is a 570-amino-acid chain: Frizzled-2 (570 aa).

A signal peptide spans 1-28; sequence MRARSALPRSALPRLLLPLLLLPAAGPA. The Extracellular portion of the chain corresponds to 29-252; it reads QFHGEKGISI…QEETRFARLW (224 aa). One can recognise an FZ domain in the interval 39–158; sequence PDHGFCQPIS…HGAEQICVGQ (120 aa). Intrachain disulfides connect C44-C105, C52-C98, C89-C126, C115-C155, and C119-C143. Residue N58 is glycosylated (N-linked (GlcNAc...) asparagine). N159 carries an N-linked (GlcNAc...) asparagine glycan. Positions 166–194 are disordered; the sequence is PALLTTAPPSGLQPGAGGTPGGPGGGGSP. Residues 179 to 193 show a composition bias toward gly residues; the sequence is PGAGGTPGGPGGGGS. Residues 253–273 form a helical membrane-spanning segment; that stretch reads ILTWSVLCCASTFFTVTTYLV. Residues 274-284 are Cytoplasmic-facing; it reads DMQRFRYPERP. Residues 285 to 305 form a helical membrane-spanning segment; sequence IIFLSGCYTMVSVAYIAGFVL. Over 306 to 332 the chain is Extracellular; the sequence is QERVVCNERFSEDGYRTVVQGTKKEGC. The chain crosses the membrane as a helical span at residues 333 to 353; sequence TILFMMLYFFSMASSIWWVIL. Residues 354-375 lie on the Cytoplasmic side of the membrane; that stretch reads SLTWFLAAGMKWGHEAIEANSQ. The helical transmembrane segment at 376 to 396 threads the bilayer; that stretch reads YFHLAAWAVPAVKTITILAMG. Over 397 to 419 the chain is Extracellular; sequence QIDGDLLSGVCFVGLNSLDPLRG. The chain crosses the membrane as a helical span at residues 420–440; it reads FVLAPLFVYLFIGTSFLLAGF. Residues 441–466 are Cytoplasmic-facing; it reads VSLFRIRTIMKHDGTKTEKLERLMVR. Residues 467-487 traverse the membrane as a helical segment; sequence IGVFSVLYTVPATIVIACYFY. The Extracellular segment spans residues 488–524; it reads EQAFREHWERSWVSQHCKSLAIPCPAHYTPRMSPDFT. The chain crosses the membrane as a helical span at residues 525 to 545; the sequence is VYMIKYLMTLIVGITSGFWIW. Residues 546 to 570 are Cytoplasmic-facing; that stretch reads SGKTLHSWRKFYTRLTNSRHGETTV. The Lys-Thr-X-X-X-Trp motif, mediates interaction with the PDZ domain of Dvl family members signature appears at 548-553; it reads KTLHSW. The PDZ-binding signature appears at 568 to 570; sequence TTV.

Belongs to the G-protein coupled receptor Fz/Smo family. Ubiquitinated by ZNRF3, leading to its degradation by the proteasome. In terms of tissue distribution, expressed in embryonic and adult heart, lung, chondrocytes and brain. Also expressed in the developing gastrointestinal tract (strongest in foregut), much weaker expression in the adult. No expression in fetal liver and adult spleen. Up-regulated in esophageal squamous cell carcinomas.

It is found in the membrane. The protein resides in the cell membrane. In terms of biological role, receptor for Wnt proteins. Most of frizzled receptors are coupled to the beta-catenin canonical signaling pathway, which leads to the activation of disheveled proteins, inhibition of GSK-3 kinase, nuclear accumulation of beta-catenin and activation of Wnt target genes. A second signaling pathway involving PKC and calcium fluxes has been seen for some family members, but it is not yet clear if it represents a distinct pathway or if it can be integrated in the canonical pathway, as PKC seems to be required for Wnt-mediated inactivation of GSK-3 kinase. Both pathways seem to involve interactions with G-proteins. May be involved in transduction and intercellular transmission of polarity information during tissue morphogenesis and/or in differentiated tissues. In Mus musculus (Mouse), this protein is Frizzled-2 (Fzd2).